Reading from the N-terminus, the 202-residue chain is MATLIYVDKENGEPGTRVVAKDGLKLGSGPSIKALDGRSQVSTPRFGKTFDAPPALPKATRKALGTVNRATEKSVKTKGPLKQKQPSFSAKKMTEKTVKAKSSVPASDDAYPEIEKFFPFNPLDFESFDLPEEHQIAHLPLSGVPLMILDEERELEKLFQLGPPSPVKMPSPPWESNLLQSPSSILSTLDVELPPVCCDIDI.

Ala2 bears the N-acetylalanine mark. The disordered stretch occupies residues 35–90 (LDGRSQVSTPRFGKTFDAPPALPKATRKALGTVNRATEKSVKTKGPLKQKQPSFSA). The short motif at 61 to 64 (RKAL) is the D-box element. 2 short sequence motifs (TEK-box) span residues 71-73 (TEK) and 94-96 (TEK). The SH3-binding signature appears at 163-173 (PPSPVKMPSPP). Residue Ser165 is modified to Phosphoserine; by CDK1.

This sequence belongs to the securin family. As to quaternary structure, interacts with RPS10 and DNAJA1. Interacts with the caspase-like ESPL1, and prevents its protease activity probably by covering its active site. Interacts with TP53 and blocks its activity probably by blocking its binding to DNA. Interacts with the Ku 70 kDa subunit of ds-DNA kinase. Interacts with PTTG1IP. Post-translationally, phosphorylated at Ser-165 by CDK1 during mitosis. Phosphorylated in vitro by ds-DNA kinase. In terms of processing, ubiquitinated through 'Lys-11' linkage of ubiquitin moieties by the anaphase promoting complex (APC) at the onset of anaphase, conducting to its degradation. 'Lys-11'-linked ubiquitination is mediated by the E2 ligase UBE2C/UBCH10. Expressed at low level in most tissues, except in adult testis, where it is highly expressed. Overexpressed in many patients suffering from pituitary adenomas, primary epithelial neoplasias, and esophageal cancer.

The protein localises to the cytoplasm. The protein resides in the nucleus. Its function is as follows. Regulatory protein, which plays a central role in chromosome stability, in the p53/TP53 pathway, and DNA repair. Probably acts by blocking the action of key proteins. During the mitosis, it blocks Separase/ESPL1 function, preventing the proteolysis of the cohesin complex and the subsequent segregation of the chromosomes. At the onset of anaphase, it is ubiquitinated, conducting to its destruction and to the liberation of ESPL1. Its function is however not limited to a blocking activity, since it is required to activate ESPL1. Negatively regulates the transcriptional activity and related apoptosis activity of TP53. The negative regulation of TP53 may explain the strong transforming capability of the protein when it is overexpressed. May also play a role in DNA repair via its interaction with Ku, possibly by connecting DNA damage-response pathways with sister chromatid separation. In Homo sapiens (Human), this protein is Securin (PTTG1).